We begin with the raw amino-acid sequence, 474 residues long: ATP synthase subunit beta (474 aa).

152–159 is an ATP binding site; sequence GGAGVGKT.

It belongs to the ATPase alpha/beta chains family. In terms of assembly, F-type ATPases have 2 components, CF(1) - the catalytic core - and CF(0) - the membrane proton channel. CF(1) has five subunits: alpha(3), beta(3), gamma(1), delta(1), epsilon(1). CF(0) has three main subunits: a(1), b(2) and c(9-12). The alpha and beta chains form an alternating ring which encloses part of the gamma chain. CF(1) is attached to CF(0) by a central stalk formed by the gamma and epsilon chains, while a peripheral stalk is formed by the delta and b chains.

The protein resides in the cell inner membrane. It catalyses the reaction ATP + H2O + 4 H(+)(in) = ADP + phosphate + 5 H(+)(out). Produces ATP from ADP in the presence of a proton gradient across the membrane. The catalytic sites are hosted primarily by the beta subunits. This Magnetococcus marinus (strain ATCC BAA-1437 / JCM 17883 / MC-1) protein is ATP synthase subunit beta.